The primary structure comprises 221 residues: MKKVLADKESLIEALKLALSTEYNVKRNFTQSVEIILTFKGIDMKKGDLKLREIVPLPKQPSKAKRVLVVPSFEQLEYAKKASPNVVITREELQKLQGQKRPVKKLARQNEWFLINQESMALAGRILGPALGPRGKFPTPLPNTADISEYINRFKRSVLVKTKDQPQVQVFIGTEDMKPEDLAENAIAVLNAIENKAKVETNLRNIYVKTTMGKAVKVKRA.

It belongs to the universal ribosomal protein uL1 family. Part of the 50S ribosomal subunit.

Its function is as follows. Probably involved in E site tRNA release. Binds directly to 23S rRNA. In terms of biological role, protein L1 is also a translational repressor protein, it controls the translation of its operon by binding to its mRNA. The protein is Large ribosomal subunit protein uL1 of Sulfolobus acidocaldarius (strain ATCC 33909 / DSM 639 / JCM 8929 / NBRC 15157 / NCIMB 11770).